The primary structure comprises 370 residues: Nematocyst expressed protein 4 (370 aa).

The first 19 residues, 1–19 (MAWTLVLLVLLGTSSCLDA), serve as a signal peptide directing secretion. Residues 34 to 55 (SGSGSGEEGSSGSGSAPEPVRD) form a disordered region. Residues 36–45 (SGSGEEGSSG) show a composition bias toward gly residues. ShKT domains lie at 70-102 (CLDK…CRFC), 113-149 (CTDA…CKLC), and 155-190 (GKKF…CEVH). Cystine bridges form between Cys70–Cys102, Cys77–Cys95, Cys84–Cys99, Cys113–Cys149, Cys121–Cys142, Cys131–Cys146, Cys164–Cys183, and Cys173–Cys187. Residues 306-340 (PYPPPPPPYPEQVPPPPPPPPPPPPPPPYPYPYPY) are compositionally biased toward pro residues. A disordered region spans residues 306–370 (PYPPPPPPYP…HHKENHSKKS (65 aa)). A compositionally biased stretch (basic residues) spans 349 to 370 (HKSKKHAKHHEKHHKENHSKKS).

This sequence belongs to the NEP3 family. In terms of tissue distribution, nematocytes. In late planulae, transcripts are found throughout the ectoderm in nematocytes, with high concentration of expressing cells in the oral pole. In primary polyps, is expressed in nematocytes in the body wall and physa ectoderm and in the upper and lower pharynx.

Its subcellular location is the nematocyst. It localises to the secreted. The protein is Nematocyst expressed protein 4 of Nematostella vectensis (Starlet sea anemone).